The primary structure comprises 90 residues: Hemoglobin subunit alpha-1 (90 aa).

Residues 1–90 (VLTDDDKNHV…SKLSDLHAEK (90 aa)) form the Globin domain.

Belongs to the globin family. As to quaternary structure, heterotetramer of two alpha chains and two beta chains. In terms of tissue distribution, red blood cells.

Involved in oxygen transport from the lung to the various peripheral tissues. This Saara hardwickii (Indian spiny-tailed lizard) protein is Hemoglobin subunit alpha-1.